Reading from the N-terminus, the 457-residue chain is Acetylcholine receptor subunit alpha (457 aa).

Residues 1–20 (MELSTVLLLLGLCSAGLVLG) form the signal peptide. Over 21 to 230 (SEHETRLVAK…ITYHFVMQRL (210 aa)) the chain is Extracellular. 2 cysteine pairs are disulfide-bonded: Cys148–Cys162 and Cys212–Cys213. An N-linked (GlcNAc...) asparagine glycan is attached at Asn161. Transmembrane regions (helical) follow at residues 231–255 (PLYF…VFYL), 263–281 (MTLS…LVIV), and 297–316 (YMLF…VIVI). The Cytoplasmic segment spans residues 317–428 (NTHHRSPSTH…WKYVAMVMDH (112 aa)). Residues 429–447 (ILLGVFMLVCLIGTLAVFA) form a helical membrane-spanning segment.

It belongs to the ligand-gated ion channel (TC 1.A.9) family. Acetylcholine receptor (TC 1.A.9.1) subfamily. Alpha-1/CHRNA1 sub-subfamily. One of the alpha chains that assemble within the acetylcholine receptor, a pentamer of two alpha chains, a beta, a delta, and a gamma (in immature muscle) or epsilon (in mature muscle) chains. The muscle heteropentamer composed of alpha-1, beta-1, delta, epsilon subunits interacts with the alpha-conotoxin ImII.

The protein localises to the postsynaptic cell membrane. It is found in the cell membrane. It catalyses the reaction K(+)(in) = K(+)(out). It carries out the reaction Na(+)(in) = Na(+)(out). In terms of biological role, upon acetylcholine binding, the AChR responds by an extensive change in conformation that affects all subunits and leads to opening of an ion-conducting channel across the plasma membrane. This chain is Acetylcholine receptor subunit alpha (Chrna1), found in Mus musculus (Mouse).